The sequence spans 151 residues: Deoxyuridine 5'-triphosphate nucleotidohydrolase (151 aa).

A Mg(2+)-binding site is contributed by arginine 28. Residues 72–74, 86–89, tyrosine 92, glycine 97, isoleucine 99, and arginine 115 each bind dUTP; these read PRS and GVID.

It belongs to the dUTPase family. It depends on Mg(2+) as a cofactor.

It carries out the reaction dUTP + H2O = dUMP + diphosphate + H(+). Functionally, this enzyme is involved in nucleotide metabolism: it produces dUMP, the immediate precursor of thymidine nucleotides and it decreases the intracellular concentration of dUTP so that uracil cannot be incorporated into DNA. The sequence is that of Deoxyuridine 5'-triphosphate nucleotidohydrolase (OPG046) from Monkeypox virus.